The sequence spans 251 residues: Aspartate/glutamate leucyltransferase (251 aa).

This sequence belongs to the R-transferase family. Bpt subfamily.

It localises to the cytoplasm. The catalysed reaction is N-terminal L-glutamyl-[protein] + L-leucyl-tRNA(Leu) = N-terminal L-leucyl-L-glutamyl-[protein] + tRNA(Leu) + H(+). It catalyses the reaction N-terminal L-aspartyl-[protein] + L-leucyl-tRNA(Leu) = N-terminal L-leucyl-L-aspartyl-[protein] + tRNA(Leu) + H(+). In terms of biological role, functions in the N-end rule pathway of protein degradation where it conjugates Leu from its aminoacyl-tRNA to the N-termini of proteins containing an N-terminal aspartate or glutamate. This is Aspartate/glutamate leucyltransferase from Xanthomonas oryzae pv. oryzae (strain MAFF 311018).